Here is a 302-residue protein sequence, read N- to C-terminus: Aspartate carbamoyltransferase catalytic subunit (302 aa).

Residues arginine 53 and threonine 54 each contribute to the carbamoyl phosphate site. Residue lysine 82 coordinates L-aspartate. 3 residues coordinate carbamoyl phosphate: arginine 103, histidine 131, and glutamine 134. Positions 164 and 223 each coordinate L-aspartate. 2 residues coordinate carbamoyl phosphate: leucine 260 and proline 261.

It belongs to the aspartate/ornithine carbamoyltransferase superfamily. ATCase family. In terms of assembly, heterooligomer of catalytic and regulatory chains.

It catalyses the reaction carbamoyl phosphate + L-aspartate = N-carbamoyl-L-aspartate + phosphate + H(+). It participates in pyrimidine metabolism; UMP biosynthesis via de novo pathway; (S)-dihydroorotate from bicarbonate: step 2/3. In terms of biological role, catalyzes the condensation of carbamoyl phosphate and aspartate to form carbamoyl aspartate and inorganic phosphate, the committed step in the de novo pyrimidine nucleotide biosynthesis pathway. This Methanococcus maripaludis (strain C6 / ATCC BAA-1332) protein is Aspartate carbamoyltransferase catalytic subunit.